Reading from the N-terminus, the 114-residue chain is Period circadian protein (114 aa).

A disordered region spans residues 23–114 (VTNTSIAGTG…VTLTESLLNK (92 aa)). 14 tandem repeats follow at residues 30–31 (GT), 33–34 (GT), 36–37 (GT), 38–39 (GT), 40–41 (GT), 42–43 (GT), 44–45 (GT), 46–47 (GT), 48–49 (GT), 50–51 (GT), 52–53 (GT), 54–55 (GT), 56–57 (GT), and 58–59 (GT). The span at 30–79 (GTGGTGGTGTGTGTGTGTGTGTGTGTGTGTDTGTGTGTGTETGTGTGTGT) shows a compositional bias: gly residues. Positions 30 to 87 (GTGGTGGTGTGTGTGTGTGTGTGTGTGTGTDTGTGTGTGTETGTGTGTGTRNGTNSGT) are 28 X 2 AA approximate tandem repeats of G-[TN]. One copy of the 15; approximate repeat lies at 60-61 (DT). 4 consecutive repeat copies span residues 62 to 63 (GT), 64 to 65 (GT), 66 to 67 (GT), and 68 to 69 (GT). Residues 70–71 (ET) form a 20; approximate repeat. 4 repeat units span residues 72 to 73 (GT), 74 to 75 (GT), 76 to 77 (GT), and 78 to 79 (GT). One copy of the 25; approximate repeat lies at 80–81 (RN). Over residues 80 to 91 (RNGTNSGTKTGT) the composition is skewed to low complexity. Repeat 26 spans residues 82–83 (GT). Residues 84–85 (NS) form a 27; approximate repeat. Repeat unit 28 spans residues 86 to 87 (GT). The span at 105-114 (VTLTESLLNK) shows a compositional bias: polar residues.

As to quaternary structure, forms a heterodimer with timeless (TIM); the complex then translocates into the nucleus. Phosphorylated with a circadian rhythmicity, probably by the double-time protein (dbt). Phosphorylation could be implicated in the stability of per monomer and in the formation of heterodimer per-tim.

It localises to the nucleus. It is found in the cytoplasm. Its subcellular location is the perinuclear region. Its function is as follows. Essential for biological clock functions. Determines the period length of circadian and ultradian rhythms; an increase in PER dosage leads to shortened circadian rhythms and a decrease leads to lengthened circadian rhythms. Essential for the circadian rhythmicity of locomotor activity, eclosion behavior, and for the rhythmic component of the male courtship song that originates in the thoracic nervous system. The biological cycle depends on the rhythmic formation and nuclear localization of the TIM-PER complex. Light induces the degradation of TIM, which promotes elimination of PER. Nuclear activity of the heterodimer coordinatively regulates PER and TIM transcription through a negative feedback loop. Behaves as a negative element in circadian transcriptional loop. Does not appear to bind DNA, suggesting indirect transcriptional inhibition. The polypeptide is Period circadian protein (per) (Drosophila orena (Fruit fly)).